We begin with the raw amino-acid sequence, 365 residues long: Mitogen-activated protein kinase 13 (365 aa).

In terms of domain architecture, Protein kinase spans 25 to 308 (YVSPTHVGSG…AAQALTHPFF (284 aa)). 31 to 39 (VGSGAYGSV) provides a ligand contact to ATP. Phosphoserine is present on Ser47. Lys54 contributes to the ATP binding site. Catalysis depends on Asp150, which acts as the Proton acceptor. A Phosphothreonine; by MAP2K3, MAP2K4, MAP2K6 and MAP2K7 modification is found at Thr180. Positions 180–182 (TGY) match the TXY motif. Tyr182 is modified (phosphotyrosine; by MAP2K3, MAP2K4, MAP2K6 and MAP2K7). Phosphoserine is present on Ser350.

It belongs to the protein kinase superfamily. CMGC Ser/Thr protein kinase family. MAP kinase subfamily. Interacts with MAPK8IP2. Mg(2+) serves as cofactor. In terms of processing, dually phosphorylated on Thr-180 and Tyr-182 by MAP2K3/MKK3, MAP2K4/MKK4, MAP2K6/MKK6 and MAP2K7/MKK7, which activates the enzyme. Dephosphorylated by dual specificity phosphatase DUSP1. As to expression, expressed in testes, pancreas, small intestine, lung and kidney. Abundant in macrophages, also present in neutrophils, CD4+ T-cells, and endothelial cells.

The catalysed reaction is L-seryl-[protein] + ATP = O-phospho-L-seryl-[protein] + ADP + H(+). It catalyses the reaction L-threonyl-[protein] + ATP = O-phospho-L-threonyl-[protein] + ADP + H(+). Its activity is regulated as follows. Activated by phosphorylation on threonine and tyrosine by dual specificity kinases, MAP2K3/MKK3, MAP2K6/MKK6, MAP2K4/MKK4 and MAP2K7/MKK7. Activation by ultraviolet radiation, hyperosmotic shock, anisomycin or by TNF-alpha is mediated by MAP2K3/MKK3. Inhibited by dual specificity phosphatase DUSP1. Serine/threonine kinase which acts as an essential component of the MAP kinase signal transduction pathway. MAPK13 is one of the four p38 MAPKs which play an important role in the cascades of cellular responses evoked by extracellular stimuli such as pro-inflammatory cytokines or physical stress leading to direct activation of transcription factors such as ELK1 and ATF2. Accordingly, p38 MAPKs phosphorylate a broad range of proteins and it has been estimated that they may have approximately 200 to 300 substrates each. MAPK13 is one of the less studied p38 MAPK isoforms. Some of the targets are downstream kinases such as MAPKAPK2, which are activated through phosphorylation and further phosphorylate additional targets. Plays a role in the regulation of protein translation by phosphorylating and inactivating EEF2K. Involved in cytoskeletal remodeling through phosphorylation of MAPT and STMN1. Mediates UV irradiation induced up-regulation of the gene expression of CXCL14. Plays an important role in the regulation of epidermal keratinocyte differentiation, apoptosis and skin tumor development. Phosphorylates the transcriptional activator MYB in response to stress which leads to rapid MYB degradation via a proteasome-dependent pathway. MAPK13 also phosphorylates and down-regulates PRKD1 during regulation of insulin secretion in pancreatic beta cells. This chain is Mitogen-activated protein kinase 13 (MAPK13), found in Homo sapiens (Human).